The primary structure comprises 342 residues: HPr kinase/phosphorylase (342 aa).

Residues His153 and Lys174 contribute to the active site. Position 168-175 (168-175 (GKSGLGKS)) interacts with ATP. Ser175 contacts Mg(2+). Residue Asp192 is the Proton acceptor; for phosphorylation activity. Proton donor; for dephosphorylation activity of the active site. The tract at residues 217 to 226 (MEIRGLGVVD) is important for the catalytic mechanism of both phosphorylation and dephosphorylation. A Mg(2+)-binding site is contributed by Glu218. Arg259 is an active-site residue. The important for the catalytic mechanism of dephosphorylation stretch occupies residues 280–285 (PIFPGK).

Belongs to the HPrK/P family. In terms of assembly, homohexamer. It depends on Mg(2+) as a cofactor.

The catalysed reaction is [HPr protein]-L-serine + ATP = [HPr protein]-O-phospho-L-serine + ADP + H(+). The enzyme catalyses [HPr protein]-O-phospho-L-serine + phosphate + H(+) = [HPr protein]-L-serine + diphosphate. Its function is as follows. Catalyzes the ATP- as well as the pyrophosphate-dependent phosphorylation of a specific serine residue in HPr, a phosphocarrier protein of the phosphoenolpyruvate-dependent sugar phosphotransferase system (PTS). HprK/P also catalyzes the pyrophosphate-producing, inorganic phosphate-dependent dephosphorylation (phosphorolysis) of seryl-phosphorylated HPr (P-Ser-HPr). The protein is HPr kinase/phosphorylase of Chlorobaculum tepidum (strain ATCC 49652 / DSM 12025 / NBRC 103806 / TLS) (Chlorobium tepidum).